A 405-amino-acid chain; its full sequence is MTQTQYRAGPDANGLFGSFGGRYVAETLMPLVLDLAREYEAAKADPKFLEELAYFQRDYIGRPNPLYFAERLTEHCGGAKIFFKREELNHTGAHKVNNCIGQVLLAKRMGKKRLIAETGAGMHGVATATVAARFGLPCVIYMGATDIERQQANVFRMKLLGAEIVPVTAGTGTLKDAMNEALRDWVTNVEDTFYLIGTVAGPHPYPAMVRDFQSIIGKETRAQLQEKEGRLPDSLIACVGGGSNAMGLFHDFLDDASVQIIGVEAGGHGVHTDKHAASLNGGVPGVLHGNRTYLLQDDDGQITDAHSISAGLDYPGIGPEHAYLHEVKRVEYVSITDDEALDAFHATCRLEGIIPALESSHALAEAIKRAPKLPKDHLMVICLSGRGDKDMQTVMNHMAAQEKQA.

Residue Lys95 is modified to N6-(pyridoxal phosphate)lysine.

The protein belongs to the TrpB family. Tetramer of two alpha and two beta chains. The cofactor is pyridoxal 5'-phosphate.

The catalysed reaction is (1S,2R)-1-C-(indol-3-yl)glycerol 3-phosphate + L-serine = D-glyceraldehyde 3-phosphate + L-tryptophan + H2O. Its pathway is amino-acid biosynthesis; L-tryptophan biosynthesis; L-tryptophan from chorismate: step 5/5. Its function is as follows. The beta subunit is responsible for the synthesis of L-tryptophan from indole and L-serine. The polypeptide is Tryptophan synthase beta chain (Pseudomonas entomophila (strain L48)).